Consider the following 493-residue polypeptide: MAKIMIQGTASSVGKSLIVAALCRIFKQDGYSVCPFKSQNMSLNSYITLDGKEMGRAQVLQAYAAGLEPEVYMNPILLKPTSDKKSQIIVNGKVYGNSTAMEYHNLKIKFKDMLKEQFKKLEENFDIVVMEGAGSPAEINLRDRDIVNMGMAELVDAPVLLVGDIDKGGVFASLAGTMLLLNEGEKERVKGTIINKFRGDVEILKPGLDMLEDIIHIPCLGVVPYTRLQLEDEDGAVEFNKKTYAPIDIAVIKMPHISNFTDLDALKSEEDVSIRFVTSKEELKKPDLLIIPGSKNTIEDLLYLRQCGLEESIKEYSNDGRIIGICGGYQVLGSKIKDPHNVETDLGEIDGLNLLDMKTIFEKEKVTTRVSAKLLNEEAENTVYGYEIHMGISKYGQNINPLFKIYDKNGEKVGYFDGAINDKGNVMGTYIHGVFDGVAFREKIINELRVKKGLKKKKSQVYEHMREKELDKLADIVRQSLDMKKIYSIIGMK.

Residues 246–440 enclose the GATase cobBQ-type domain; that stretch reads PIDIAVIKMP…IHGVFDGVAF (195 aa). The active-site Nucleophile is C326. H432 is a catalytic residue.

Belongs to the CobB/CobQ family. CobQ subfamily.

The protein operates within cofactor biosynthesis; adenosylcobalamin biosynthesis. Its function is as follows. Catalyzes amidations at positions B, D, E, and G on adenosylcobyrinic A,C-diamide. NH(2) groups are provided by glutamine, and one molecule of ATP is hydrogenolyzed for each amidation. The chain is Cobyric acid synthase from Clostridium botulinum (strain Loch Maree / Type A3).